The following is a 928-amino-acid chain: Dual serine/threonine and tyrosine protein kinase (928 aa).

The segment covering 1–14 (MEGDGVPWGSEPES) has biased composition (low complexity). Disordered stretches follow at residues 1 to 22 (MEGD…GGGG) and 55 to 81 (LRGS…AGDV). A coiled-coil region spans residues 394 to 430 (RKKENELYESLMNIANRKQEEMKDMIVETLNTMKEEL). One can recognise a Protein kinase domain in the interval 651-905 (PKLGQELGRG…PLLGIVQPML (255 aa)). Residues 657 to 665 (LGRGQYGVV) and Lys-680 each bind ATP. The active-site Proton acceptor is the Asp-776.

This sequence belongs to the protein kinase superfamily. Ser/Thr protein kinase family.

It is found in the cytoplasm. Its subcellular location is the cell membrane. It localises to the apical cell membrane. The protein resides in the basolateral cell membrane. The protein localises to the cell junction. The enzyme catalyses L-seryl-[protein] + ATP = O-phospho-L-seryl-[protein] + ADP + H(+). It carries out the reaction L-threonyl-[protein] + ATP = O-phospho-L-threonyl-[protein] + ADP + H(+). It catalyses the reaction L-tyrosyl-[protein] + ATP = O-phospho-L-tyrosyl-[protein] + ADP + H(+). Functionally, acts as a positive regulator of ERK phosphorylation downstream of fibroblast growth factor-receptor activation. Involved in the regulation of both caspase-dependent apoptosis and caspase-independent cell death. In the skin, it plays a predominant role in suppressing caspase-dependent apoptosis in response to UV stress in a range of dermal cell types. In Bos taurus (Bovine), this protein is Dual serine/threonine and tyrosine protein kinase (DSTYK).